Here is a 178-residue protein sequence, read N- to C-terminus: Fluoride-specific ion channel FluC 2 (178 aa).

The next 4 helical transmembrane spans lie at 25-45, 63-83, 97-117, and 129-149; these read PDIHLDIVLVVFCGGAIGTAI, FVANMLACFCYAGLTAYLAGA, GLGMGVCGGLSTMSTLALEGF, and IAYLLVTFALGLVCASAGVWA. Residues Gly-104 and Ser-107 each contribute to the Na(+) site.

The protein belongs to the fluoride channel Fluc/FEX (TC 1.A.43) family.

It is found in the cell membrane. The catalysed reaction is fluoride(in) = fluoride(out). Its activity is regulated as follows. Na(+) is not transported, but it plays an essential structural role and its presence is essential for fluoride channel function. Functionally, fluoride-specific ion channel. Important for reducing fluoride concentration in the cell, thus reducing its toxicity. The chain is Fluoride-specific ion channel FluC 2 from Bifidobacterium longum (strain NCC 2705).